The sequence spans 113 residues: U11-theraphotoxin-Hhn1s (113 aa).

The N-terminal stretch at 1-21 (MNTVRVTFLLVFVLAVSLGQA) is a signal peptide. The propeptide occupies 22–74 (DKDENRMEMQEKTEQGKSYLDFAENLLLQKLEELEAKLLEEDSEESRNSRQKR). The segment at 61–83 (EEDSEESRNSRQKRCIGEGVPCD) is disordered. 3 disulfides stabilise this stretch: C75-C90, C82-C95, and C89-C110.

The protein belongs to the neurotoxin 14 (magi-1) family. 01 (HNTX-16) subfamily. Expressed by the venom gland.

Its subcellular location is the secreted. In terms of biological role, probable ion channel inhibitor. The chain is U11-theraphotoxin-Hhn1s from Cyriopagopus hainanus (Chinese bird spider).